We begin with the raw amino-acid sequence, 219 residues long: MLAAKSIAGPRAFKASAVRAAPKAGRRTVVVMARKNEVSESYAKALVELADEKGKLEAVHADVDAVAGLMKENAKLSALIMNPVVESDKKRAVLAKIAKEAGFQQYTINWLNLLVEKDRLSLVPEICECFEDLYCQMTDTQVATLRSAVKLEQEQQFLIAKKLQELTGSKNIKLKPVIDSSLIAGFVVEYGSSQIDLSVRGQIERVADQLTKEMTAKLS.

The N-terminal 33 residues, 1 to 33 (MLAAKSIAGPRAFKASAVRAAPKAGRRTVVVMA), are a transit peptide targeting the chloroplast.

Belongs to the ATPase delta chain family. F-type ATPases have 2 components, F(1) - the catalytic core - and F(0) - the membrane proton channel. F(1) has five subunits: alpha(3), beta(3), gamma(1), delta(1), epsilon(1). F(0) has four main subunits: a(1), b(1), b'(1) and c(10-14). The alpha and beta chains form an alternating ring which encloses part of the gamma chain. F(1) is attached to F(0) by a central stalk formed by the gamma and epsilon chains, while a peripheral stalk is formed by the delta, b and b' chains.

It localises to the plastid. The protein resides in the chloroplast thylakoid membrane. In terms of biological role, f(1)F(0) ATP synthase produces ATP from ADP in the presence of a proton or sodium gradient. F-type ATPases consist of two structural domains, F(1) containing the extramembraneous catalytic core and F(0) containing the membrane proton channel, linked together by a central stalk and a peripheral stalk. During catalysis, ATP synthesis in the catalytic domain of F(1) is coupled via a rotary mechanism of the central stalk subunits to proton translocation. Its function is as follows. This protein seems to be part of the stalk that links CF(0) to CF(1). It either transmits conformational changes from CF(0) into CF(1) or is implicated in proton conduction. This is ATP synthase delta chain, chloroplastic from Chlamydomonas reinhardtii (Chlamydomonas smithii).